We begin with the raw amino-acid sequence, 125 residues long: Glycine cleavage system H protein (125 aa).

Residues 19–101 form the Lipoyl-binding domain; sequence VAVVGISDYA…EGKGWFMKLK (83 aa). Lys60 is subject to N6-lipoyllysine.

The protein belongs to the GcvH family. As to quaternary structure, the glycine cleavage system is composed of four proteins: P, T, L and H. Requires (R)-lipoate as cofactor.

The glycine cleavage system catalyzes the degradation of glycine. The H protein shuttles the methylamine group of glycine from the P protein to the T protein. The protein is Glycine cleavage system H protein of Xanthobacter autotrophicus (strain ATCC BAA-1158 / Py2).